A 187-amino-acid polypeptide reads, in one-letter code: Ribosome-recycling factor (187 aa).

It belongs to the RRF family.

It is found in the cytoplasm. Its function is as follows. Responsible for the release of ribosomes from messenger RNA at the termination of protein biosynthesis. May increase the efficiency of translation by recycling ribosomes from one round of translation to another. This Rhodopseudomonas palustris (strain BisA53) protein is Ribosome-recycling factor.